Consider the following 479-residue polypeptide: Glutamate--tRNA ligase (479 aa).

The short motif at 9–19 (PSPTGLFHIGT) is the 'HIGH' region element. The short motif at 248–252 (KLSKR) is the 'KMSKS' region element. Lysine 251 contacts ATP.

This sequence belongs to the class-I aminoacyl-tRNA synthetase family. Glutamate--tRNA ligase type 1 subfamily. Monomer.

The protein resides in the cytoplasm. The catalysed reaction is tRNA(Glu) + L-glutamate + ATP = L-glutamyl-tRNA(Glu) + AMP + diphosphate. Catalyzes the attachment of glutamate to tRNA(Glu) in a two-step reaction: glutamate is first activated by ATP to form Glu-AMP and then transferred to the acceptor end of tRNA(Glu). This chain is Glutamate--tRNA ligase, found in Prochlorococcus marinus (strain MIT 9215).